Reading from the N-terminus, the 366-residue chain is GTPase Obg (366 aa).

One can recognise an Obg domain in the interval 1 to 161; the sequence is MRFVDEARIQ…FNLRLELKIL (161 aa). Residues 121-148 are disordered; that stretch reads SGGRGGKGNEHFKSSTMRAPRFSQPGEP. The region spanning 162 to 334 is the OBG-type G domain; the sequence is ADAGLIGLPN…LVQELWQVCE (173 aa). Residues 168–175, 193–197, 217–220, 287–290, and 315–317 each bind GTP; these read GLPNAGKS, FTTLT, DIPG, NKID, and SAR. Mg(2+)-binding residues include serine 175 and threonine 195.

Belongs to the TRAFAC class OBG-HflX-like GTPase superfamily. OBG GTPase family. As to quaternary structure, monomer. The cofactor is Mg(2+).

It is found in the cytoplasm. Its function is as follows. An essential GTPase which binds GTP, GDP and possibly (p)ppGpp with moderate affinity, with high nucleotide exchange rates and a fairly low GTP hydrolysis rate. Plays a role in control of the cell cycle, stress response, ribosome biogenesis and in those bacteria that undergo differentiation, in morphogenesis control. This is GTPase Obg from Desulfovibrio desulfuricans (strain ATCC 27774 / DSM 6949 / MB).